Consider the following 241-residue polypeptide: Putative hydrolase 080R (241 aa).

One can recognise a Nudix hydrolase domain in the interval 50 to 241 (FPDLSFNLMV…VIKVQKIMIL (192 aa)). The Nudix box signature appears at 136-157 (GHCNGNEPVLSTLLREFREETT). The Mg(2+) site is built by Glu151, Glu155, and Asp204.

This sequence belongs to the Nudix hydrolase family.

In Aedes vexans (Inland floodwater mosquito), this protein is Putative hydrolase 080R.